The sequence spans 257 residues: NAD-capped RNA hydrolase NudC (257 aa).

Substrate is bound at residue R69. Residues C98 and C101 each coordinate Zn(2+). Residue E111 participates in substrate binding. The Zn(2+) site is built by C116 and C119. Substrate is bound at residue Y124. In terms of domain architecture, Nudix hydrolase spans 125 to 248 (PQIAPCIIVA…TVARRLIEDT (124 aa)). 3 residues coordinate a divalent metal cation: A158, E174, and E178. A Nudix box motif is present at residues 159–180 (GFVEVGETLEQAVAREVMEESG). Residue 192 to 199 (QPWPFPQS) participates in substrate binding. Residue E219 coordinates a divalent metal cation. Residue A241 participates in substrate binding.

This sequence belongs to the Nudix hydrolase family. NudC subfamily. Homodimer. It depends on Mg(2+) as a cofactor. Requires Mn(2+) as cofactor. The cofactor is Zn(2+).

The enzyme catalyses a 5'-end NAD(+)-phospho-ribonucleoside in mRNA + H2O = a 5'-end phospho-adenosine-phospho-ribonucleoside in mRNA + beta-nicotinamide D-ribonucleotide + 2 H(+). It catalyses the reaction NAD(+) + H2O = beta-nicotinamide D-ribonucleotide + AMP + 2 H(+). The catalysed reaction is NADH + H2O = reduced beta-nicotinamide D-ribonucleotide + AMP + 2 H(+). Its function is as follows. mRNA decapping enzyme that specifically removes the nicotinamide adenine dinucleotide (NAD) cap from a subset of mRNAs by hydrolyzing the diphosphate linkage to produce nicotinamide mononucleotide (NMN) and 5' monophosphate mRNA. The NAD-cap is present at the 5'-end of some mRNAs and stabilizes RNA against 5'-processing. Has preference for mRNAs with a 5'-end purine. Catalyzes the hydrolysis of a broad range of dinucleotide pyrophosphates. The sequence is that of NAD-capped RNA hydrolase NudC from Citrobacter koseri (strain ATCC BAA-895 / CDC 4225-83 / SGSC4696).